Reading from the N-terminus, the 434-residue chain is UDP-N-acetylglucosamine 1-carboxyvinyltransferase (434 aa).

22–23 (KN) serves as a coordination point for phosphoenolpyruvate. Arginine 99 is a binding site for UDP-N-acetyl-alpha-D-glucosamine. Cysteine 123 acts as the Proton donor in catalysis. A 2-(S-cysteinyl)pyruvic acid O-phosphothioketal modification is found at cysteine 123. UDP-N-acetyl-alpha-D-glucosamine is bound by residues 128-132 (RPVDQ), aspartate 317, and isoleucine 339.

This sequence belongs to the EPSP synthase family. MurA subfamily.

It is found in the cytoplasm. The enzyme catalyses phosphoenolpyruvate + UDP-N-acetyl-alpha-D-glucosamine = UDP-N-acetyl-3-O-(1-carboxyvinyl)-alpha-D-glucosamine + phosphate. The protein operates within cell wall biogenesis; peptidoglycan biosynthesis. Cell wall formation. Adds enolpyruvyl to UDP-N-acetylglucosamine. This Paracidovorax citrulli (strain AAC00-1) (Acidovorax citrulli) protein is UDP-N-acetylglucosamine 1-carboxyvinyltransferase.